The chain runs to 98 residues: MNLIDLILIAIYVIGISGLIFNKNNIINILIISELNLGTLGMLFVLASVELNDILGELSGLYILTFTAAESAIGLAIVVILYSKTGIINIRNLNKLKG.

3 consecutive transmembrane segments (helical) span residues 1-21 (MNLI…GLIF), 26-46 (IINI…LFVL), and 61-81 (LYIL…VVIL).

Belongs to the complex I subunit 4L family.

It localises to the mitochondrion membrane. The enzyme catalyses a ubiquinone + NADH + 5 H(+)(in) = a ubiquinol + NAD(+) + 4 H(+)(out). Functionally, core subunit of the mitochondrial membrane respiratory chain NADH dehydrogenase (Complex I) that is believed to belong to the minimal assembly required for catalysis. Complex I functions in the transfer of electrons from NADH to the respiratory chain. The immediate electron acceptor for the enzyme is believed to be ubiquinone. The sequence is that of NADH-ubiquinone oxidoreductase chain 4L (nad4L) from Dictyostelium citrinum (Slime mold).